The chain runs to 226 residues: MSNRIFQRGDPIGHAFADPDLLAQALRHRSAGTPHNERLEFLGDGIVNLLVAEALYQRWPKADEGALTRARAELVREGALAVIGRTLNLGERLTLGPGELKSGGHRRDSILADAVEAIVAAIYLDCGFERCRAVVLPWFEASLAALPVGKAEKDPKTRLQEWLQARQLPLPNYALISESGDEHAKQFHVACILEQPVARAEGQGTSRRLAEQQAATLVIAQLDSRM.

An RNase III domain is found at 5–127 (IFQRGDPIGH…IVAAIYLDCG (123 aa)). Glu40 lines the Mg(2+) pocket. The active site involves Asp44. Residues Asp113 and Glu116 each coordinate Mg(2+). Residue Glu116 is part of the active site. The region spanning 154–224 (DPKTRLQEWL…ATLVIAQLDS (71 aa)) is the DRBM domain.

Belongs to the ribonuclease III family. In terms of assembly, homodimer. Requires Mg(2+) as cofactor.

The protein resides in the cytoplasm. The catalysed reaction is Endonucleolytic cleavage to 5'-phosphomonoester.. Digests double-stranded RNA. Involved in the processing of primary rRNA transcript to yield the immediate precursors to the large and small rRNAs (23S and 16S). Processes some mRNAs, and tRNAs when they are encoded in the rRNA operon. Processes pre-crRNA and tracrRNA of type II CRISPR loci if present in the organism. This Xanthomonas oryzae pv. oryzae (strain KACC10331 / KXO85) protein is Ribonuclease 3.